Here is a 46-residue protein sequence, read N- to C-terminus: Endochitinase 4 (46 aa).

Belongs to the glycosyl hydrolase 19 family. Chitinase class I subfamily.

It carries out the reaction Random endo-hydrolysis of N-acetyl-beta-D-glucosaminide (1-&gt;4)-beta-linkages in chitin and chitodextrins.. In terms of biological role, defense against chitin-containing fungal and bacterial pathogens. This chain is Endochitinase 4, found in Arachis hypogaea (Peanut).